The primary structure comprises 875 residues: Lysine-specific demethylase JMJ26 (875 aa).

The tract at residues 31 to 103 (KPVEATSLSS…RSSVKKRATT (73 aa)) is disordered. Residues 62–69 (RKRSKADE) carry the Nuclear localization signal motif. Basic and acidic residues predominate over residues 79-93 (KCDDENKCEENEKKQ). Positions 193, 196, 207, 210, 216, 219, 236, 239, 322, 325, 339, and 347 each coordinate Zn(2+). The RING-type; degenerate zinc finger occupies 193–240 (CHQCSKGERRYLFICTFCEVRLYCFPCIKKWYPHLSTDDILEKCPFCR). The B box-type; degenerate zinc-finger motif lies at 317–347 (EERVFCNHCATSIVDLHRSCPKCSYELCLNC). Residues 614–837 (PRSGILNIAT…ECLRLTDEFR (224 aa)) form the JmjC domain. Residues His-658, Asp-660, and His-805 each contribute to the Fe cation site.

It belongs to the JARID1 histone demethylase family. Requires Fe(2+) as cofactor. In terms of tissue distribution, expressed in inflorescences, roots, siliques, leaves and stems.

Its subcellular location is the nucleus. Functionally, may function as histone H3 lysine demethylase and be involved in regulation of gene expression. In Arabidopsis thaliana (Mouse-ear cress), this protein is Lysine-specific demethylase JMJ26.